A 338-amino-acid polypeptide reads, in one-letter code: MKLTGKQTWVFEHPIFVNSAGTAAGPKEKDGPLGSLFDKTYDEMHCNQKSWEMAERQLMEDAVNVALQKNNLTKDDIDLLLAGDLLNQNVTANYVARHLKIPFLCMFGACSTSMETVAVASALVDGGFAKRALAATSSHNATAERQFRYPTEYGGQKPDTATSTVTGSGAVVISQTPGDIQITSATVGKVSDLGITDPFDMGSAMAPAAADTIKQHFKDLNRTADDYDLILTGDLSGVGSPIVKDILKEDGYPVGTKHDDCGLLIYTPDQQVFAGGSGCACSAVVTYSHIFKQLREGKLNRVFVVATGALLSPTMIQQKETIPTIAHGVVFERAGGAS.

This is Stage V sporulation protein AD (spoVAD) from Bacillus subtilis (strain 168).